Reading from the N-terminus, the 334-residue chain is MKTLGEFIIEKQAEYPEAKGELSGILSSIRLAAKIIHREINRAGLSQDILGVAGSENIQGEAQMKLDVFANETMKKALLAREEVAGFASEEDDNFVAFENDRAKNAKYILMTDPLDGSSNIDVNVSVGTIFSIYKRVSPIGSPVTMEDFLQEGRKQVASGYVTYGSSTMLVYTTGNGVNGFTYDPSLGLFILSHPDMKIPTEGKYYSINEGQYVTFPMGVKKFIKYCQESDEATKRPYSSRYIGSLVSDFHRNLLKGGIYIYPTSTVYPKGKLRLLYEGNPMAFLAEQAGGMATDGFNPILDIKPSELHQRVPFFVGSTSMVKQADKFMQECAE.

The Mg(2+) site is built by Glu90, Asp113, Leu115, and Asp116. Substrate is bound by residues 116 to 119 (DGSS), Asn209, Tyr242, and Lys272. Position 278 (Glu278) interacts with Mg(2+).

This sequence belongs to the FBPase class 1 family. As to quaternary structure, homotetramer. It depends on Mg(2+) as a cofactor.

It localises to the cytoplasm. The enzyme catalyses beta-D-fructose 1,6-bisphosphate + H2O = beta-D-fructose 6-phosphate + phosphate. It participates in carbohydrate biosynthesis; gluconeogenesis. The protein is Fructose-1,6-bisphosphatase class 1 of Actinobacillus pleuropneumoniae serotype 5b (strain L20).